Reading from the N-terminus, the 227-residue chain is Cytochrome c oxidase subunit 2 (227 aa).

The Mitochondrial intermembrane portion of the chain corresponds to methionine 1–serine 14. A helical transmembrane segment spans residues proline 15–methionine 45. Residues leucine 46–glutamine 59 are Mitochondrial matrix-facing. A helical transmembrane segment spans residues glutamate 60–methionine 87. The Mitochondrial intermembrane portion of the chain corresponds to aspartate 88–isoleucine 227. 6 residues coordinate Cu cation: histidine 161, cysteine 196, glutamate 198, cysteine 200, histidine 204, and methionine 207. Position 198 (glutamate 198) interacts with Mg(2+). Tyrosine 218 carries the post-translational modification Phosphotyrosine.

The protein belongs to the cytochrome c oxidase subunit 2 family. As to quaternary structure, component of the cytochrome c oxidase (complex IV, CIV), a multisubunit enzyme composed of 14 subunits. The complex is composed of a catalytic core of 3 subunits MT-CO1, MT-CO2 and MT-CO3, encoded in the mitochondrial DNA, and 11 supernumerary subunits COX4I, COX5A, COX5B, COX6A, COX6B, COX6C, COX7A, COX7B, COX7C, COX8 and NDUFA4, which are encoded in the nuclear genome. The complex exists as a monomer or a dimer and forms supercomplexes (SCs) in the inner mitochondrial membrane with NADH-ubiquinone oxidoreductase (complex I, CI) and ubiquinol-cytochrome c oxidoreductase (cytochrome b-c1 complex, complex III, CIII), resulting in different assemblies (supercomplex SCI(1)III(2)IV(1) and megacomplex MCI(2)III(2)IV(2)). Found in a complex with TMEM177, COA6, COX18, COX20, SCO1 and SCO2. Interacts with TMEM177 in a COX20-dependent manner. Interacts with COX20. Interacts with COX16. The cofactor is Cu cation.

The protein localises to the mitochondrion inner membrane. It catalyses the reaction 4 Fe(II)-[cytochrome c] + O2 + 8 H(+)(in) = 4 Fe(III)-[cytochrome c] + 2 H2O + 4 H(+)(out). Its function is as follows. Component of the cytochrome c oxidase, the last enzyme in the mitochondrial electron transport chain which drives oxidative phosphorylation. The respiratory chain contains 3 multisubunit complexes succinate dehydrogenase (complex II, CII), ubiquinol-cytochrome c oxidoreductase (cytochrome b-c1 complex, complex III, CIII) and cytochrome c oxidase (complex IV, CIV), that cooperate to transfer electrons derived from NADH and succinate to molecular oxygen, creating an electrochemical gradient over the inner membrane that drives transmembrane transport and the ATP synthase. Cytochrome c oxidase is the component of the respiratory chain that catalyzes the reduction of oxygen to water. Electrons originating from reduced cytochrome c in the intermembrane space (IMS) are transferred via the dinuclear copper A center (CU(A)) of subunit 2 and heme A of subunit 1 to the active site in subunit 1, a binuclear center (BNC) formed by heme A3 and copper B (CU(B)). The BNC reduces molecular oxygen to 2 water molecules using 4 electrons from cytochrome c in the IMS and 4 protons from the mitochondrial matrix. This is Cytochrome c oxidase subunit 2 (MT-CO2) from Hybomys univittatus (Peter's striped mouse).